Reading from the N-terminus, the 239-residue chain is 1-(5-phosphoribosyl)-5-[(5-phosphoribosylamino)methylideneamino] imidazole-4-carboxamide isomerase (239 aa).

The active-site Proton acceptor is the Asp8. The active-site Proton donor is Asp129.

This sequence belongs to the HisA/HisF family.

It localises to the cytoplasm. The catalysed reaction is 1-(5-phospho-beta-D-ribosyl)-5-[(5-phospho-beta-D-ribosylamino)methylideneamino]imidazole-4-carboxamide = 5-[(5-phospho-1-deoxy-D-ribulos-1-ylimino)methylamino]-1-(5-phospho-beta-D-ribosyl)imidazole-4-carboxamide. The protein operates within amino-acid biosynthesis; L-histidine biosynthesis; L-histidine from 5-phospho-alpha-D-ribose 1-diphosphate: step 4/9. In Paramagnetospirillum magneticum (strain ATCC 700264 / AMB-1) (Magnetospirillum magneticum), this protein is 1-(5-phosphoribosyl)-5-[(5-phosphoribosylamino)methylideneamino] imidazole-4-carboxamide isomerase.